A 179-amino-acid polypeptide reads, in one-letter code: Probable chorismate pyruvate-lyase (179 aa).

Arginine 82, leucine 120, and glutamate 165 together coordinate substrate.

It belongs to the UbiC family.

The protein resides in the cytoplasm. It catalyses the reaction chorismate = 4-hydroxybenzoate + pyruvate. Its pathway is cofactor biosynthesis; ubiquinone biosynthesis. Functionally, removes the pyruvyl group from chorismate, with concomitant aromatization of the ring, to provide 4-hydroxybenzoate (4HB) for the ubiquinone pathway. This is Probable chorismate pyruvate-lyase from Vibrio cholerae serotype O1 (strain ATCC 39315 / El Tor Inaba N16961).